A 270-amino-acid polypeptide reads, in one-letter code: L-fucose dehydrogenase (270 aa).

NAD(+) contacts are provided by arginine 19, isoleucine 21, aspartate 40, lysine 41, aspartate 62, valine 63, asparagine 89, tyrosine 154, lysine 158, isoleucine 187, threonine 189, and leucine 191.

Belongs to the short-chain dehydrogenases/reductases (SDR) family.

It carries out the reaction L-fucose + NAD(+) = L-fucono-1,5-lactone + NADH + H(+). The enzyme catalyses D-arabinose + NAD(+) = D-arabinono-1,5-lactone + NADH + H(+). It catalyses the reaction L-galactose + NAD(+) = L-galactono-1,5-lactone + NADH + H(+). In terms of biological role, catalyzes the NAD(+)-dependent oxidation of L-fucose, yielding L-fucono-1,5-lactone, which rapidly converts spontaneously to L-fucone-1,4-lactone. Does not use NADPH. Displays low activity on L-fucose, D-arabinose and L-galactose compared with rabbit and human. This is consitent with the low L-fucose metabolism observed in this species. This Rattus norvegicus (Rat) protein is L-fucose dehydrogenase (Hsd17b14).